The chain runs to 429 residues: Violacein synthase (429 aa).

3-21 (RAIIVGGGLAGGLTAIYLA) provides a ligand contact to FAD.

It depends on FAD as a cofactor.

The catalysed reaction is protoviolaceinate + NADPH + O2 + H(+) = violaceinate + NADP(+) + H2O. The enzyme catalyses protoviolaceinate + NADH + O2 + H(+) = violaceinate + NAD(+) + H2O. It catalyses the reaction protodeoxyviolaceinate + NADPH + O2 + H(+) = deoxyviolaceinate + NADP(+) + H2O. It carries out the reaction protodeoxyviolaceinate + NADH + O2 + H(+) = deoxyviolaceinate + NAD(+) + H2O. It functions in the pathway pigment biosynthesis; violacein biosynthesis. Functionally, catalyzes the hydroxylation of the 16-position of protoviolaceinate and protodeoxyviolaceinate to form violacein and deoxyviolacein, respectively. This is Violacein synthase (vioC) from Chromobacterium violaceum (strain ATCC 12472 / DSM 30191 / JCM 1249 / CCUG 213 / NBRC 12614 / NCIMB 9131 / NCTC 9757 / MK).